Here is a 183-residue protein sequence, read N- to C-terminus: Peptide deformylase (183 aa).

Residues Cys-111 and His-154 each contribute to the Fe cation site. The active site involves Glu-155. His-158 provides a ligand contact to Fe cation.

The protein belongs to the polypeptide deformylase family. Fe(2+) is required as a cofactor.

It carries out the reaction N-terminal N-formyl-L-methionyl-[peptide] + H2O = N-terminal L-methionyl-[peptide] + formate. Its function is as follows. Removes the formyl group from the N-terminal Met of newly synthesized proteins. Requires at least a dipeptide for an efficient rate of reaction. N-terminal L-methionine is a prerequisite for activity but the enzyme has broad specificity at other positions. The protein is Peptide deformylase of Staphylococcus aureus (strain COL).